The primary structure comprises 209 residues: Translation initiation factor 2 subunit beta (209 aa).

The region spanning 144–202 (TIEEGKEYVVEITEVGSSGEGRTNYKGYTIFVPGAKRGETVKVRIKKVKNDVAIGEIIE) is the TRAM domain.

It belongs to the eIF-2-beta/eIF-5 family. In terms of assembly, heterotrimer composed of an alpha, a beta and a gamma chain.

EIF-2 functions in the early steps of protein synthesis by forming a ternary complex with GTP and initiator tRNA. The sequence is that of Translation initiation factor 2 subunit beta (eif2b) from Thermoplasma acidophilum (strain ATCC 25905 / DSM 1728 / JCM 9062 / NBRC 15155 / AMRC-C165).